A 31-amino-acid chain; its full sequence is Cycloviolacin-O19 (31 aa).

Positions 1-31 (GTLPCGESCVWIPCISSVVGCSCKSKVCYKD) form a cross-link, cyclopeptide (Gly-Asp). 3 cysteine pairs are disulfide-bonded: Cys-5-Cys-21, Cys-9-Cys-23, and Cys-14-Cys-28.

In terms of processing, this is a cyclic peptide. In terms of tissue distribution, expressed in petioles and runners but not in leaves, petals and roots (at protein level).

Functionally, probably participates in a plant defense mechanism. The protein is Cycloviolacin-O19 of Viola odorata (Sweet violet).